We begin with the raw amino-acid sequence, 281 residues long: Diaminopimelate epimerase (281 aa).

Substrate is bound by residues Asn-13, Gln-46, and Asn-66. The Proton donor role is filled by Cys-75. Substrate is bound by residues 76 to 77 (GN), Asn-160, Asn-193, and 211 to 212 (ER). Cys-220 serves as the catalytic Proton acceptor. Substrate is bound at residue 221-222 (GT).

Belongs to the diaminopimelate epimerase family. Homodimer.

Its subcellular location is the cytoplasm. The enzyme catalyses (2S,6S)-2,6-diaminopimelate = meso-2,6-diaminopimelate. It participates in amino-acid biosynthesis; L-lysine biosynthesis via DAP pathway; DL-2,6-diaminopimelate from LL-2,6-diaminopimelate: step 1/1. Its function is as follows. Catalyzes the stereoinversion of LL-2,6-diaminopimelate (L,L-DAP) to meso-diaminopimelate (meso-DAP), a precursor of L-lysine and an essential component of the bacterial peptidoglycan. The polypeptide is Diaminopimelate epimerase (Acinetobacter baylyi (strain ATCC 33305 / BD413 / ADP1)).